The following is a 229-amino-acid chain: MSTWANLGLQDSASPLMEQLIFFHDHALLILVMITVLVGYLMFMLFFNSYVNRFLLHGQLIEMIWTILPAIILLFIAMPSLRLLYLLDEINEPSITLKSIGHQWYWSYEYSDFNNIEFDSYMIPTNELSNDGFRLLDVDNRIVLPMNSQIRILVTAADVIHSWTVPALGVKVDGTPGRLNQTNFFINRPGLFYGQCSEICGANHSFMPIVIESVPVNYFIKWISNSVNS.

The Mitochondrial intermembrane portion of the chain corresponds to 1–26 (MSTWANLGLQDSASPLMEQLIFFHDH). Residues 27-48 (ALLILVMITVLVGYLMFMLFFN) form a helical membrane-spanning segment. The Mitochondrial matrix segment spans residues 49-62 (SYVNRFLLHGQLIE). A helical membrane pass occupies residues 63–82 (MIWTILPAIILLFIAMPSLR). Residues 83–229 (LLYLLDEINE…IKWISNSVNS (147 aa)) lie on the Mitochondrial intermembrane side of the membrane. Positions 161, 196, 198, 200, 204, and 207 each coordinate Cu cation. E198 serves as a coordination point for Mg(2+).

This sequence belongs to the cytochrome c oxidase subunit 2 family. As to quaternary structure, component of the cytochrome c oxidase (complex IV, CIV), a multisubunit enzyme composed of a catalytic core of 3 subunits and several supernumerary subunits. The complex exists as a monomer or a dimer and forms supercomplexes (SCs) in the inner mitochondrial membrane with ubiquinol-cytochrome c oxidoreductase (cytochrome b-c1 complex, complex III, CIII). Requires Cu cation as cofactor.

It localises to the mitochondrion inner membrane. The enzyme catalyses 4 Fe(II)-[cytochrome c] + O2 + 8 H(+)(in) = 4 Fe(III)-[cytochrome c] + 2 H2O + 4 H(+)(out). Functionally, component of the cytochrome c oxidase, the last enzyme in the mitochondrial electron transport chain which drives oxidative phosphorylation. The respiratory chain contains 3 multisubunit complexes succinate dehydrogenase (complex II, CII), ubiquinol-cytochrome c oxidoreductase (cytochrome b-c1 complex, complex III, CIII) and cytochrome c oxidase (complex IV, CIV), that cooperate to transfer electrons derived from NADH and succinate to molecular oxygen, creating an electrochemical gradient over the inner membrane that drives transmembrane transport and the ATP synthase. Cytochrome c oxidase is the component of the respiratory chain that catalyzes the reduction of oxygen to water. Electrons originating from reduced cytochrome c in the intermembrane space (IMS) are transferred via the dinuclear copper A center (CU(A)) of subunit 2 and heme A of subunit 1 to the active site in subunit 1, a binuclear center (BNC) formed by heme A3 and copper B (CU(B)). The BNC reduces molecular oxygen to 2 water molecules using 4 electrons from cytochrome c in the IMS and 4 protons from the mitochondrial matrix. The chain is Cytochrome c oxidase subunit 2 (mt:CoII) from Drosophila ambigua (Fruit fly).